Reading from the N-terminus, the 195-residue chain is Guanylate kinase (195 aa).

One can recognise a Guanylate kinase-like domain in the interval 10–189 (GRLIVFSAPS…TVDAVATRIA (180 aa)). Residue 17–24 (APSGTGKS) coordinates ATP.

It belongs to the guanylate kinase family.

Its subcellular location is the cytoplasm. The catalysed reaction is GMP + ATP = GDP + ADP. Its function is as follows. Essential for recycling GMP and indirectly, cGMP. This is Guanylate kinase from Chlorobaculum tepidum (strain ATCC 49652 / DSM 12025 / NBRC 103806 / TLS) (Chlorobium tepidum).